The primary structure comprises 246 residues: Carbonic anhydrase (246 aa).

An N-terminal signal peptide occupies residues 1 to 22 (MKTSLGKAALLALSMMPVTVFA). In terms of domain architecture, Alpha-carbonic anhydrase spans 23-246 (SHWSYEGEGS…QPLNGRVVIE (224 aa)). A disulfide bridge connects residues Cys46 and Cys201. His84 functions as the Proton acceptor in the catalytic mechanism. Zn(2+) contacts are provided by His111, His113, and His130. 197–198 (TT) serves as a coordination point for substrate.

The protein belongs to the alpha-carbonic anhydrase family. The cofactor is Zn(2+).

It is found in the periplasm. The catalysed reaction is hydrogencarbonate + H(+) = CO2 + H2O. In terms of biological role, reversible hydration of carbon dioxide. This chain is Carbonic anhydrase (cah), found in Klebsiella pneumoniae.